A 396-amino-acid polypeptide reads, in one-letter code: Cathepsin D (396 aa).

The first 18 residues, 1–18, serve as a signal peptide directing secretion; it reads MKFLYLFLFAVFAWTSDA. The propeptide at 19–61 is activation peptide; that stretch reads IVRIPLKKFRSIRRTLSDSGLNVEQLLAGTNSLQHNQGFPSSN. One can recognise a Peptidase A1 domain in the interval 76-393; the sequence is YYGEIGLGTP…DRESNRVGFA (318 aa). The active site involves aspartate 94. Cysteine 107 and cysteine 114 are oxidised to a cystine. Asparagine 131 carries N-linked (GlcNAc...) asparagine glycosylation. Cysteine 272 and cysteine 276 form a disulfide bridge. The active site involves aspartate 281. A disulfide bridge connects residues cysteine 315 and cysteine 352.

It belongs to the peptidase A1 family. Monomer.

The protein resides in the lysosome. It catalyses the reaction Specificity similar to, but narrower than, that of pepsin A. Does not cleave the 4-Gln-|-His-5 bond in B chain of insulin.. Its activity is regulated as follows. Inhibited by pepstatin. Functionally, acid protease active in intracellular protein breakdown. This is Cathepsin D (ctsd) from Clupea harengus (Atlantic herring).